The sequence spans 61 residues: Large ribosomal subunit protein bL32 (61 aa).

Residues 1-16 show a composition bias toward basic residues; sequence MAVPKRKTSPSKRGMR. Residues 1–33 are disordered; it reads MAVPKRKTSPSKRGMRRSADGLKAPTYVEDKNS.

Belongs to the bacterial ribosomal protein bL32 family.

The chain is Large ribosomal subunit protein bL32 from Allorhizobium ampelinum (strain ATCC BAA-846 / DSM 112012 / S4) (Agrobacterium vitis (strain S4)).